We begin with the raw amino-acid sequence, 540 residues long: Alanine aminotransferase 2 (540 aa).

The residue at position 358 (Lys358) is an N6-(pyridoxal phosphate)lysine.

The protein belongs to the class-I pyridoxal-phosphate-dependent aminotransferase family. Alanine aminotransferase subfamily. Homodimer. Pyridoxal 5'-phosphate serves as cofactor.

It catalyses the reaction L-alanine + 2-oxoglutarate = pyruvate + L-glutamate. It participates in amino-acid degradation; L-alanine degradation via transaminase pathway; pyruvate from L-alanine: step 1/1. Functionally, catalyzes the reversible transamination between alanine and 2-oxoglutarate to form pyruvate and glutamate. This Xenopus laevis (African clawed frog) protein is Alanine aminotransferase 2 (gpt2).